A 635-amino-acid chain; its full sequence is Extracellular metalloproteinase MEP (635 aa).

The signal sequence occupies residues 1–19 (MRAFLLASLASLPAVNVYA). Positions 20–244 (HPTHNSRGLT…VHAVVDYAAE (225 aa)) are excised as a propeptide. N-linked (GlcNAc...) asparagine glycosylation is found at N287, N302, and N336. H429 contributes to the Zn(2+) binding site. E430 is an active-site residue. H433 contacts Zn(2+).

Belongs to the peptidase M36 family. Zn(2+) serves as cofactor.

It localises to the secreted. Functionally, secreted metalloproteinase that allows assimilation of proteinaceous substrates. The protein is Extracellular metalloproteinase MEP (MEP) of Leptosphaeria maculans (strain JN3 / isolate v23.1.3 / race Av1-4-5-6-7-8) (Blackleg fungus).